Reading from the N-terminus, the 145-residue chain is DnaJ homolog subfamily B member 3 (145 aa).

The region spanning 1-69 (MVDYYEVLDV…KKRDIYDRYG (69 aa)) is the J domain.

As to expression, expressed in sperm (at protein level).

In terms of biological role, may operate as a co-chaperone of the male germ cell- and haploid stage-specific Hsp70 proteins. This is DnaJ homolog subfamily B member 3 (DNAJB3) from Homo sapiens (Human).